The following is a 218-amino-acid chain: MGTPSDRVPLAERVEELLAVGGPLPIVAAGDPVLRRAAEPYDGQVAPALFERFVEALRLTMHAAPGVGLAAPQVGVGLRVAVIEDPAPVPDEVRVARGRVPQPFRVLVNPSYEPAGAGRAAFFEGCLSVPGWQAVVARHAEVRLRAHDEHGRAVDEVFAGWPARIVQHETDHLDGTLYLDRAELRSLASNAAMAELWSQPTPRRAASALGFELPGPAA.

Cys-126 and His-168 together coordinate Fe cation. The active site involves Glu-169. Residue His-172 coordinates Fe cation.

It belongs to the polypeptide deformylase family. Fe(2+) is required as a cofactor.

It catalyses the reaction N-terminal N-formyl-L-methionyl-[peptide] + H2O = N-terminal L-methionyl-[peptide] + formate. Removes the formyl group from the N-terminal Met of newly synthesized proteins. Requires at least a dipeptide for an efficient rate of reaction. N-terminal L-methionine is a prerequisite for activity but the enzyme has broad specificity at other positions. This chain is Peptide deformylase 1, found in Streptomyces coelicolor (strain ATCC BAA-471 / A3(2) / M145).